Reading from the N-terminus, the 73-residue chain is uncharacterized protein (73 aa).

The first 28 residues, 1 to 28, serve as a signal peptide directing secretion; the sequence is MKFLLSVIAGLLILALYLFWKVQPPVWI.

This is an uncharacterized protein from Bacillus subtilis (strain 168).